We begin with the raw amino-acid sequence, 206 residues long: Putative amino-acid transporter YggA (206 aa).

A run of 6 helical transmembrane segments spans residues 1-21 (MFAT…PIGA), 37-57 (LLAA…GVFG), 65-85 (SPIG…WFGI), 116-136 (LGVT…LGSF), 148-168 (FAAG…FGAA), and 185-205 (TIVG…ALLA).

Belongs to the LysE/ArgO transporter (TC 2.A.75) family.

Its subcellular location is the cell membrane. The protein is Putative amino-acid transporter YggA (yggA) of Aeromonas salmonicida.